A 129-amino-acid chain; its full sequence is Small ribosomal subunit protein uS11 (129 aa).

Belongs to the universal ribosomal protein uS11 family. Part of the 30S ribosomal subunit. Interacts with proteins S7 and S18. Binds to IF-3.

Its function is as follows. Located on the platform of the 30S subunit, it bridges several disparate RNA helices of the 16S rRNA. Forms part of the Shine-Dalgarno cleft in the 70S ribosome. This chain is Small ribosomal subunit protein uS11, found in Stenotrophomonas maltophilia (strain R551-3).